Here is a 236-residue protein sequence, read N- to C-terminus: 5'-methylthioadenosine/S-adenosylhomocysteine nucleosidase (236 aa).

The active-site Proton acceptor is the Glu-12. Residues Gly-78, Met-153, and 174–175 (ME) each bind substrate. The active-site Proton donor is Asp-198.

Belongs to the PNP/UDP phosphorylase family. MtnN subfamily.

The catalysed reaction is S-adenosyl-L-homocysteine + H2O = S-(5-deoxy-D-ribos-5-yl)-L-homocysteine + adenine. It carries out the reaction S-methyl-5'-thioadenosine + H2O = 5-(methylsulfanyl)-D-ribose + adenine. It catalyses the reaction 5'-deoxyadenosine + H2O = 5-deoxy-D-ribose + adenine. Its pathway is amino-acid biosynthesis; L-methionine biosynthesis via salvage pathway; S-methyl-5-thio-alpha-D-ribose 1-phosphate from S-methyl-5'-thioadenosine (hydrolase route): step 1/2. Catalyzes the irreversible cleavage of the glycosidic bond in both 5'-methylthioadenosine (MTA) and S-adenosylhomocysteine (SAH/AdoHcy) to adenine and the corresponding thioribose, 5'-methylthioribose and S-ribosylhomocysteine, respectively. Also cleaves 5'-deoxyadenosine, a toxic by-product of radical S-adenosylmethionine (SAM) enzymes, into 5-deoxyribose and adenine. The protein is 5'-methylthioadenosine/S-adenosylhomocysteine nucleosidase of Geobacillus thermodenitrificans (strain NG80-2).